A 102-amino-acid chain; its full sequence is Large ribosomal subunit protein bL21 (102 aa).

Belongs to the bacterial ribosomal protein bL21 family. Part of the 50S ribosomal subunit. Contacts protein L20.

Its function is as follows. This protein binds to 23S rRNA in the presence of protein L20. This chain is Large ribosomal subunit protein bL21, found in Oleidesulfovibrio alaskensis (strain ATCC BAA-1058 / DSM 17464 / G20) (Desulfovibrio alaskensis).